Consider the following 265-residue polypeptide: 3-methyl-2-oxobutanoate hydroxymethyltransferase (265 aa).

Aspartate 43 and aspartate 82 together coordinate Mg(2+). Residues 43 to 44 (DS), aspartate 82, and lysine 111 contribute to the 3-methyl-2-oxobutanoate site. Glutamate 113 contributes to the Mg(2+) binding site. Catalysis depends on glutamate 180, which acts as the Proton acceptor.

The protein belongs to the PanB family. As to quaternary structure, homodecamer; pentamer of dimers. The cofactor is Mg(2+).

The protein resides in the cytoplasm. It catalyses the reaction 3-methyl-2-oxobutanoate + (6R)-5,10-methylene-5,6,7,8-tetrahydrofolate + H2O = 2-dehydropantoate + (6S)-5,6,7,8-tetrahydrofolate. Its pathway is cofactor biosynthesis; (R)-pantothenate biosynthesis; (R)-pantoate from 3-methyl-2-oxobutanoate: step 1/2. Catalyzes the reversible reaction in which hydroxymethyl group from 5,10-methylenetetrahydrofolate is transferred onto alpha-ketoisovalerate to form ketopantoate. This Francisella tularensis subsp. holarctica (strain OSU18) protein is 3-methyl-2-oxobutanoate hydroxymethyltransferase.